The primary structure comprises 868 residues: Leucine--tRNA ligase (868 aa).

The short motif at 42 to 52 (PYPSGKLHMGH) is the 'HIGH' region element. Positions 627–631 (KMSKS) match the 'KMSKS' region motif. K630 contacts ATP.

The protein belongs to the class-I aminoacyl-tRNA synthetase family.

Its subcellular location is the cytoplasm. The catalysed reaction is tRNA(Leu) + L-leucine + ATP = L-leucyl-tRNA(Leu) + AMP + diphosphate. The sequence is that of Leucine--tRNA ligase from Pseudomonas syringae pv. syringae (strain B728a).